We begin with the raw amino-acid sequence, 192 residues long: Signal peptidase complex catalytic subunit SEC11C (192 aa).

Over 1–28 (MVRAGAVGTHLPTSSLDIFGDLRKMNKR) the chain is Cytoplasmic. The helical; Signal-anchor for type II membrane protein transmembrane segment at 29-48 (QLYYQVLNFAMIVSSALMIW) threads the bilayer. Topologically, residues 49-192 (KGLIVLTGSE…GAYVLLKRES (144 aa)) are lumenal. Active-site charge relay system residues include Ser-68, His-108, and Asp-134. A C-terminal short (CTS) helix region spans residues 177 to 188 (ALLAVMGAYVLL).

Belongs to the peptidase S26B family. Component of the signal peptidase complex paralog C (SPC-C) composed of a catalytic subunit SEC11C and three accessory subunits SPCS1, SPCS2 and SPCS3. Within the complex, interacts with SPCS2 and SPCS3. The complex induces a local thinning of the ER membrane which is used to measure the length of the signal peptide (SP) h-region of protein substrates. This ensures the selectivity of the complex towards h-regions shorter than 18-20 amino acids. May undergo processing at the N-terminus.

Its subcellular location is the endoplasmic reticulum membrane. It carries out the reaction Cleavage of hydrophobic, N-terminal signal or leader sequences from secreted and periplasmic proteins.. Its function is as follows. Catalytic component of the signal peptidase complex (SPC) which catalyzes the cleavage of N-terminal signal sequences from nascent proteins as they are translocated into the lumen of the endoplasmic reticulum. Specifically cleaves N-terminal signal peptides that contain a hydrophobic alpha-helix (h-region) shorter than 18-20 amino acids. The protein is Signal peptidase complex catalytic subunit SEC11C (Sec11c) of Mus musculus (Mouse).